The chain runs to 455 residues: Peroxisomal membrane protein PEX3 (455 aa).

The segment covering 113–125 has biased composition (polar residues); that stretch reads TVLSDDFSTSQEG. The interval 113–135 is disordered; sequence TVLSDDFSTSQEGAISEDTNKPP. A helical transmembrane segment spans residues 155–171; the sequence is FLTLIYCESLLIVFLHL.

Belongs to the peroxin-3 family. Component of the peroxisomal docking complex, composed of at least PEX3, PEX13, PEX14 and PEX17. Component of the peroxisomal translocation complex, composed of at least PEX3, PEX2, PEX10 and PEX12. Interacts with PEX19. Interacts with the pexophagy receptor ATG30.

Its subcellular location is the peroxisome membrane. Peroxisomal membrane protein required for peroxisome biosynthesis. Shared component of both the peroxisomal docking complex and the peroxisomal translocation complex. The two types of peroxisomal matrix targeting signals, PTS1 and PTS2, are first recognized in the cytosol by their receptors PEX5 and PEX7, respectively, which then carry the cargo to the peroxisomal membrane. The peroxisomal targeting signal (PTS) receptor-cargo complexes interact with peroxisomal membrane protein (PMP) components of the docking complex. They have then additional downstream interactions with the translocation complex, leading to the transport of fully folded and oligomerized cargo into the peroxisome matrix. PEX3 acts as an anchoring site for PEX19 on the peroxisomal membrane and thus plays a crucial role in the assembly of the peroxisomal translocation complex. Is also essential for the interaction between the two complexes. Finally. PEX3 activates selective autophagy of peroxisomes (pexophagy) via interaction with the pexophagy receptor ATG30. The protein is Peroxisomal membrane protein PEX3 of Komagataella pastoris (Yeast).